Consider the following 100-residue polypeptide: Mitochondrial import inner membrane translocase subunit Tim10 B (100 aa).

The Twin CX3C motif motif lies at 25–49; the sequence is CFQRCVPSLHHRALDAEEEACLHSC. 2 disulfide bridges follow: C25-C49 and C29-C45.

It belongs to the small Tim family. As to quaternary structure, component of the TIM22 complex, which core is composed of TIMM22, associated with TIMM10 (TIMM10A and/or TIMM10B), TIMM9, AGK and TIMM29.

Its subcellular location is the mitochondrion inner membrane. Functionally, component of the TIM22 complex, a complex that mediates the import and insertion of multi-pass transmembrane proteins into the mitochondrial inner membrane. The TIM22 complex forms a twin-pore translocase that uses the membrane potential as the external driving force. In the TIM22 complex, it may act as a docking point for the soluble 70 kDa complex that guides the target proteins in transit through the aqueous mitochondrial intermembrane space. The polypeptide is Mitochondrial import inner membrane translocase subunit Tim10 B (Timm10b) (Rattus norvegicus (Rat)).